The following is a 217-amino-acid chain: Adenylate kinase (217 aa).

An ATP-binding site is contributed by 10 to 15 (GAGKGT). The interval 30–59 (STGDMLRAAVKAGTPLGIEAKKVMDAGGLV) is NMP. AMP-binding positions include T31, R36, 57 to 59 (GLV), 85 to 88 (GFPR), and Q92. The segment at 122 to 159 (GRRAHLASGRTYHVKYNPPKVEGKDDVTGEDLVQRDDD) is LID. Residues R123 and 132 to 133 (TY) contribute to the ATP site. The AMP site is built by R156 and R167. G203 serves as a coordination point for ATP.

This sequence belongs to the adenylate kinase family. Monomer.

Its subcellular location is the cytoplasm. The catalysed reaction is AMP + ATP = 2 ADP. It participates in purine metabolism; AMP biosynthesis via salvage pathway; AMP from ADP: step 1/1. Functionally, catalyzes the reversible transfer of the terminal phosphate group between ATP and AMP. Plays an important role in cellular energy homeostasis and in adenine nucleotide metabolism. The chain is Adenylate kinase from Azoarcus sp. (strain BH72).